We begin with the raw amino-acid sequence, 70 residues long: DNA-directed RNA polymerase subunit omega (70 aa).

The protein belongs to the RNA polymerase subunit omega family. As to quaternary structure, the RNAP catalytic core consists of 2 alpha, 1 beta, 1 beta' and 1 omega subunit. When a sigma factor is associated with the core the holoenzyme is formed, which can initiate transcription.

It catalyses the reaction RNA(n) + a ribonucleoside 5'-triphosphate = RNA(n+1) + diphosphate. Functionally, promotes RNA polymerase assembly. Latches the N- and C-terminal regions of the beta' subunit thereby facilitating its interaction with the beta and alpha subunits. In Bacillus cereus (strain B4264), this protein is DNA-directed RNA polymerase subunit omega.